The primary structure comprises 86 residues: Beta-toxin To4 (86 aa).

The first 20 residues, 1–20, serve as a signal peptide directing secretion; that stretch reads MTRFVLFISCFFLIGMIVEC. Residues 21-83 enclose the LCN-type CS-alpha/beta domain; the sequence is KDGYLMEYGG…IWNRATNKCG (63 aa). 4 disulfide bridges follow: cysteine 31–cysteine 82, cysteine 35–cysteine 57, cysteine 43–cysteine 63, and cysteine 47–cysteine 65. The residue at position 82 (cysteine 82) is a Cysteine amide.

Belongs to the long (4 C-C) scorpion toxin superfamily. Sodium channel inhibitor family. Beta subfamily. Expressed by the venom gland.

The protein localises to the secreted. In terms of biological role, beta toxins bind voltage-independently at site-4 of sodium channels (Nav) and shift the voltage of activation toward more negative potentials thereby affecting sodium channel activation and promoting spontaneous and repetitive firing. This toxin shows moderate inhibition of Nav1.1/SCN1A, Nav1.2/SCN2A, and Nav1.4/SCN4A, and promotes a left voltage shift on these channels. It exhibits similar potency on Nav1.2/SCN2A and Nav1.4/SCN4A (40-50% peak current inhibition at 0.5 uM), and weaker inhibition on Nav1.2 (20-30% peak current inhibition at 0.5 uM). The chain is Beta-toxin To4 from Tityus obscurus (Amazonian scorpion).